The following is a 549-amino-acid chain: NAC domain-containing protein 53 (549 aa).

The NAC domain maps to 9-159; it reads LAPGFRFHPT…AFVLCRIFQK (151 aa). The DNA-binding element occupies 108-165; sequence VGMKKTLVYHKGRAPRGERTNWVMHEYRLVDQDLDKTGVHQDAFVLCRIFQKSGSGPK. A compositionally biased stretch (basic and acidic residues) spans 395-416; the sequence is LEKEETSRSKHVVEEKEKDEAS. The interval 395 to 418 is disordered; the sequence is LEKEETSRSKHVVEEKEKDEASCS. Residues 526 to 546 form a helical membrane-spanning segment; that stretch reads LIFMCFWVLLLSVSFKVSILV.

As to expression, expressed in roots, rosette leaves, cauline leaves, shoot apex and stems.

It localises to the endoplasmic reticulum membrane. Its subcellular location is the nucleus. In terms of biological role, transcriptional activator activated by proteolytic cleavage through regulated intramembrane proteolysis (RIP). Promotes reactive oxygen species (ROS) production during drought-induced leaf senescence. In response to abscisic acid (ABA)-mediated drought stress signals, binds directly to the promoters of RBOHC and RBOHE genes, encoding ROS biosynthetic enzymes, resulting in ROS accumulation and triggering leaf senescence via programmed cell death (PCD). ROS-induced leaf senescence sustains plant survival under drought conditions. Involved in heat stress response. Modulates PCD through a ROS-mediated positive feedback control under heat stress conditions. This may provide an adaptation strategy for plant survival under extreme heat stress conditions. Acts as a repressor in preventing anther dehiscence during stamen development by suppressing genes that participate in jasmonic acid (JA) biosynthesis, such as DAD1, AOS, AOC3, OPR3 and 4CLL5/OPCL1. The polypeptide is NAC domain-containing protein 53 (Arabidopsis thaliana (Mouse-ear cress)).